The following is an 81-amino-acid chain: ATP synthase subunit c, chloroplastic (81 aa).

A run of 2 helical transmembrane segments spans residues 7–27 (AASV…PGIG) and 57–77 (LAFM…LLFA).

This sequence belongs to the ATPase C chain family. In terms of assembly, F-type ATPases have 2 components, F(1) - the catalytic core - and F(0) - the membrane proton channel. F(1) has five subunits: alpha(3), beta(3), gamma(1), delta(1), epsilon(1). F(0) has four main subunits: a(1), b(1), b'(1) and c(10-14). The alpha and beta chains form an alternating ring which encloses part of the gamma chain. F(1) is attached to F(0) by a central stalk formed by the gamma and epsilon chains, while a peripheral stalk is formed by the delta, b and b' chains.

Its subcellular location is the plastid. It localises to the chloroplast thylakoid membrane. F(1)F(0) ATP synthase produces ATP from ADP in the presence of a proton or sodium gradient. F-type ATPases consist of two structural domains, F(1) containing the extramembraneous catalytic core and F(0) containing the membrane proton channel, linked together by a central stalk and a peripheral stalk. During catalysis, ATP synthesis in the catalytic domain of F(1) is coupled via a rotary mechanism of the central stalk subunits to proton translocation. In terms of biological role, key component of the F(0) channel; it plays a direct role in translocation across the membrane. A homomeric c-ring of between 10-14 subunits forms the central stalk rotor element with the F(1) delta and epsilon subunits. The sequence is that of ATP synthase subunit c, chloroplastic from Staurastrum punctulatum (Green alga).